The sequence spans 240 residues: MAPSRPSSKWRTGGFAARGEGISQVRFGNQNGKRRTWRPNPQQAFRGSVRKGQGFAFRRKLKIQQNYKKLLWKVKEAPASQESQFTDRYPEHLKHLYLAEEERLRKQQRKAGLALSEEQVDRPLPEEEGSTEQTSSEEPPGGHQPQPEELNTGSSVTFPKNKKKKTSNQKAQEEYERVQAKRAAKKFEFEMRKQEREEAQRLYKKKKMEAFKILSKKTKKGQPNLNLQMEYLLQKIQENS.

Residues 104 to 181 are disordered; the sequence is LRKQQRKAGL…QEEYERVQAK (78 aa). The span at 131 to 149 shows a compositional bias: low complexity; sequence TEQTSSEEPPGGHQPQPEE. Residues 171 to 181 show a composition bias toward basic and acidic residues; it reads AQEEYERVQAK.

The protein belongs to the TAP26 family. Interacts with NKX2-1.

It localises to the nucleus. In terms of biological role, component of the transcription complexes of the pulmonary surfactant-associated protein-B (SFTPB) and -C (SFTPC). Enhances homeobox protein Nkx-2.1-activated SFTPB and SFTPC promoter activities. The protein is Thyroid transcription factor 1-associated protein 26 (Ccdc59) of Mus musculus (Mouse).